The chain runs to 1325 residues: Nephrocystin-3 (1325 aa).

The interval 1–20 is disordered; that stretch reads MGTASSLVSPTGGEVIEDTY. Residue Gly-2 is the site of N-myristoyl glycine attachment. The stretch at 107–203 forms a coiled coil; it reads SMGRREAKLD…QRLQAQGIQV (97 aa). TPR repeat units follow at residues 467 to 500, 881 to 914, 916 to 937, 938 to 971, 980 to 1013, 1022 to 1055, 1088 to 1121, 1130 to 1163, 1172 to 1205, 1214 to 1247, and 1256 to 1289; these read TPEEDDFGDVLWDIHDEQEQMEAFQQTSSSAHEL, CLLNLLVAQNLYKRGHFAELLSYWQFVGKDKGAM, TEYFESLKQYENSEGEENMLCL, ADLYETLGRFLKDLGLLSQAVVPLQRSLEIRETA, AQSLHQLAGVYVQWKKFGDAEQLYKQALEISENA, ARELEALATLYHKQNKYEQAEHFRKKSVIIRQQA, ARTLNELGVLYFLQNNLETAEQFLKRSLEMRERV, AQSLNNLAALCNEKKQYEKAEELYERALDIRRRA, AYTVKHLAILYKKTGKVDKAVPLYELAVEIRQKS, ATALVNLAVLHSQMKKHSEALPLYERALKIYEDS, and GETLKNLAVLSYEEGNFEKAAELYKRAMEIKEAE. The disordered stretch occupies residues 1293 to 1325; it reads LGGKAPSRQSSSGDTFLFKTTHSPNVFLPQGQS. Residues 1299 to 1325 are compositionally biased toward polar residues; it reads SRQSSSGDTFLFKTTHSPNVFLPQGQS.

In terms of assembly, interacts with NPHP1 and INVS/NPHP2. Interacts (when myristoylated) with UNC119 and UNC119B; interaction is required for localization to cilium. Interacts with CEP164. Component of a complex containing at least ANKS6, INVS, NEK8 and NPHP3. ANKS6 may organize complex assembly by linking INVS and NPHP3 to NEK8 and INVS may target the complex to the proximal ciliary axoneme.

It localises to the cell projection. Its subcellular location is the cilium. Required for normal ciliary development and function. Inhibits disheveled-1-induced canonical Wnt-signaling activity and may also play a role in the control of non-canonical Wnt signaling that regulates planar cell polarity. Probably acts as a molecular switch between different Wnt signaling pathways. Required for proper convergent extension cell movements. The sequence is that of Nephrocystin-3 (Nphp3) from Mus musculus (Mouse).